Here is a 212-residue protein sequence, read N- to C-terminus: Bilin biosynthesis protein PecF (212 aa).

Belongs to the CpcE/RpcE/PecE family.

An enzyme involved in the biosynthesis of bilin. The chain is Bilin biosynthesis protein PecF (pecF) from Mastigocladus laminosus (Fischerella sp.).